Consider the following 207-residue polypeptide: Casparian strip membrane protein 1 (207 aa).

A2 is subject to N-acetylalanine. At 2-44 (AKESTTIDVGEPNTMTKSTSHVVVDEKKKKGFVAAAAGGGYKR) the chain is on the cytoplasmic side. Residues 45 to 65 (GLAVFDFLLRLAAIGITIGAS) traverse the membrane as a helical segment. Residues 66-95 (SVMFTAEETLPFFTQFLQFQAGYDDFPTFQ) lie on the Extracellular side of the membrane. Residues 96–116 (FFVIAIAIVASYLVLSLPFSI) traverse the membrane as a helical segment. The Cytoplasmic segment spans residues 117 to 128 (VTIVRPLAVAPR). Residues 129 to 149 (LILLISDTVVLTLTTAAAAAA) traverse the membrane as a helical segment. Topologically, residues 150–181 (ASIVYLAHNGNTNTNWLPICQQFGDFCQTAST) are extracellular. The helical transmembrane segment at 182-202 (AVVAASISVAFFVLLIVISAI) threads the bilayer. Residues 203–207 (ALKRH) are Cytoplasmic-facing.

The protein belongs to the Casparian strip membrane proteins (CASP) family. As to quaternary structure, homodimer and heterodimers.

Its subcellular location is the cell membrane. Its function is as follows. Regulates membrane-cell wall junctions and localized cell wall deposition. Required for establishment of the Casparian strip membrane domain (CSD) and the subsequent formation of Casparian strips, a cell wall modification of the root endodermis that determines an apoplastic barrier between the intraorganismal apoplasm and the extraorganismal apoplasm and prevents lateral diffusion. The protein is Casparian strip membrane protein 1 of Raphanus raphanistrum (Wild radish).